A 692-amino-acid chain; its full sequence is Formate hydrogenlyase transcriptional activator FhlA (692 aa).

Residues 202–344 (DMDELVSEVA…QIAERVAIAV (143 aa)) enclose the GAF domain. Residues 381–610 (IIGRSEAMYS…LENVIERAVL (230 aa)) form the Sigma-54 factor interaction domain. ATP-binding positions include 409-416 (GETGTGKE) and 472-481 (ADKSSLFLDE). The segment at residues 663 to 682 (PKGAAQRLGLKRTTLLSRMK) is a DNA-binding region (H-T-H motif).

In terms of biological role, required for induction of expression of the formate dehydrogenase H and hydrogenase-3 structural genes. Also activates expression of hyf operon (encodes the silent hydrogenase-4 gene cluster). The sequence is that of Formate hydrogenlyase transcriptional activator FhlA (fhlA) from Escherichia coli (strain K12).